The sequence spans 371 residues: Cytokine receptor-like factor 2 (371 aa).

Positions 1–22 (MGRLVLLWGAAVFLLGGWMALG) are cleaved as a signal peptide. The Extracellular segment spans residues 23 to 231 (QGGAAEGVQI…PTPPKPKLSK (209 aa)). N-linked (GlcNAc...) asparagine glycosylation is found at asparagine 47 and asparagine 55. An intrachain disulfide couples cysteine 71 to cysteine 84. N-linked (GlcNAc...) asparagine glycosylation is found at asparagine 101 and asparagine 169. Positions 118 to 211 (KPSSPKHVRF…DWSEVTCWQR (94 aa)) constitute a Fibronectin type-III domain. A disulfide bond links cysteine 180 and cysteine 218. A WSXWS motif motif is present at residues 200 to 204 (PSDWS). The chain crosses the membrane as a helical span at residues 232–252 (FILISSLAILLMVSLLLLSLW). The Cytoplasmic portion of the chain corresponds to 253–371 (KLWRVKKFLI…VMNDRSYVAL (119 aa)). The Box 1 motif motif lies at 261 to 269 (LIPSVPDPK). Basic and acidic residues predominate over residues 322 to 336 (ESPRMLDPQTEEKEA). The segment at 322–347 (ESPRMLDPQTEEKEASGGSLQLPHQP) is disordered.

The protein belongs to the type I cytokine receptor family. Type 5 subfamily. In terms of assembly, heterodimer of CRLF2 and IL7R. As to expression, expressed in heart, skeletal muscle, kidney and adult and fetal liver. Primarily expressed in dendrites and monocytes. Weakly expressed in T-cells.

The protein localises to the cell membrane. The protein resides in the secreted. Its function is as follows. Receptor for thymic stromal lymphopoietin (TSLP). Forms a functional complex with TSLP and IL7R which is capable of stimulating cell proliferation through activation of STAT3 and STAT5. Also activates JAK2. Implicated in the development of the hematopoietic system. This Homo sapiens (Human) protein is Cytokine receptor-like factor 2 (CRLF2).